A 512-amino-acid polypeptide reads, in one-letter code: Glutathione-binding protein GsiB (512 aa).

Residues 1–26 form the signal peptide; it reads MTQFITHKWLAALGLASSIAAFPALA.

The protein belongs to the bacterial solute-binding protein 5 family. In terms of assembly, the complex is composed of two ATP-binding proteins (GsiA), two transmembrane proteins (GsiC and GsiD) and a solute-binding protein (GsiB).

The protein resides in the periplasm. Functionally, part of the ABC transporter complex GsiABCD involved in glutathione import. Binds glutathione. The sequence is that of Glutathione-binding protein GsiB from Salmonella typhimurium (strain LT2 / SGSC1412 / ATCC 700720).